The chain runs to 959 residues: MATKTQLELFTKLTSNDKAIRLSSAAQLIDSLSNEEELKYSLNRLTKGLSSGRESARIGFAVALTELLTRTKDIRATHVLDLLVKHNTASGNLKGQDERDFYFGLLFGLQSIVYSGILTHKESTIEDFQRVVDLLLQLSGKKNWLQDVCFYVIYKLVEQIPEISFSSNAFLAVNKLLQTPAVSKSTEGVGLFLCLTRVPDNVKSEEVAMANWEPAHPLHKSNLVTLSKIMRQADASETGGQNSAWKQKIPMVWKYIFEEYQRKTYSGLAPFHDFWAVVVDEGIFSSTSSLERKFWGFQIMELALDYVSSDNIGDIFSKNFLHCLINHLSDEDRYLYRAAKRVTSKLEKVSKQNPTLVYPIAIHLLGERGSLNFDRVTNTKLVEHILPLADEQGILQLFQLLLSYVKRCPEDIASDTKAVEWRRQWATDTMLSILRSKRSIKQEPWVRELLEIFIAYGYFEVPESEEVIPKFSEGTQNMFRLRLMSALSYLSSSAFQQSQTDHQLGDKNWPYVALNYLLELEKSPKNNLLISMDESVIEIVQKSLSVLHKVTKKIDKKAQHLQQLNAFQLLYSLVLLQVYAGDTDSIDVLEDIDNCYSKVFNKKSKRESTSNEPTAMEILTEVMLSLLSRPSLLLRKLVDMLFTSFSEDMNRESIHLICDVLKAKESVKDSEGMFAGEEVEEDAFGETEMDEDDFEEIDTDEIEEQSDWEMISNQDASDNEELERKLDKVLEDADAKVKDEESSEEELMNDEQMLALDEKLAEVFRERKKASNKEKKKNAQETKQQIVQFKVKVIDLIDNYYKTQPNNGLGFEFLIPLLEMILKTKHKVLEEKGQAVFRNRLSKLKWTEEKPSSKNVLEALKKVHVLCGKKASLGSTGSSISQLLLKLLADTPYLKEGVEVYLKSFLLWIQEPSKSHYNANIFHDFINWGAQQRLKHQQTSTAASSPQKTGHHENEKTNH.

Phosphoserine is present on residues S742 and S743. Residues 936 to 959 (HQQTSTAASSPQKTGHHENEKTNH) are disordered. The span at 937–948 (QQTSTAASSPQK) shows a compositional bias: polar residues. The span at 950–959 (GHHENEKTNH) shows a compositional bias: basic and acidic residues.

This sequence belongs to the MYBBP1A family. Interacts with cdc10.

It localises to the nucleus. Plays an important role in the regulation of rRNA transcription. Binds to rDNA promoter fragments. In Schizosaccharomyces pombe (strain 972 / ATCC 24843) (Fission yeast), this protein is rDNA transcriptional regulator pol5 (pol5).